The primary structure comprises 157 residues: SsrA-binding protein (157 aa).

The disordered stretch occupies residues 132–157 (KLHDKRETEKKRDWSREKGRLLRSRG). Residues 135-151 (DKRETEKKRDWSREKGR) are compositionally biased toward basic and acidic residues.

This sequence belongs to the SmpB family.

It is found in the cytoplasm. In terms of biological role, required for rescue of stalled ribosomes mediated by trans-translation. Binds to transfer-messenger RNA (tmRNA), required for stable association of tmRNA with ribosomes. tmRNA and SmpB together mimic tRNA shape, replacing the anticodon stem-loop with SmpB. tmRNA is encoded by the ssrA gene; the 2 termini fold to resemble tRNA(Ala) and it encodes a 'tag peptide', a short internal open reading frame. During trans-translation Ala-aminoacylated tmRNA acts like a tRNA, entering the A-site of stalled ribosomes, displacing the stalled mRNA. The ribosome then switches to translate the ORF on the tmRNA; the nascent peptide is terminated with the 'tag peptide' encoded by the tmRNA and targeted for degradation. The ribosome is freed to recommence translation, which seems to be the essential function of trans-translation. This Rhodopseudomonas palustris (strain ATCC BAA-98 / CGA009) protein is SsrA-binding protein.